A 399-amino-acid chain; its full sequence is Guanine nucleotide-binding protein negative regulator 1 (399 aa).

WD repeat units lie at residues 44–83, 105–145, 150–194, 207–247, 252–292, and 296–337; these read KPLN…LSKK, YSYS…NKAS, DHQE…VMTT, SLKG…PCQL, ERGN…DMVY, and GHRG…EETH.

As to quaternary structure, interacts with gpa1.

The protein resides in the cytoplasm. Functionally, negatively regulates the pheromone-response pathway. Acts as a structural mimic of the G protein beta subunit thereby interacting with gpa1 which then inhibits gpa1 signaling. The sequence is that of Guanine nucleotide-binding protein negative regulator 1 (gnr1) from Schizosaccharomyces pombe (strain 972 / ATCC 24843) (Fission yeast).